We begin with the raw amino-acid sequence, 271 residues long: Eukaryotic translation initiation factor 3 subunit G (271 aa).

3 disordered regions span residues 1-26 (MSTT…TNPD), 63-119 (AQRK…AQKL), and 147-187 (TTSS…RDDS). S77 carries the post-translational modification Phosphoserine. The RRM domain occupies 188–267 (TTLKVSQLNS…LILHLEWSKK (80 aa)).

The protein belongs to the eIF-3 subunit G family. Component of the eukaryotic translation initiation factor 3 (eIF-3) complex.

It localises to the cytoplasm. Functionally, RNA-binding component of the eukaryotic translation initiation factor 3 (eIF-3) complex, which is involved in protein synthesis of a specialized repertoire of mRNAs and, together with other initiation factors, stimulates binding of mRNA and methionyl-tRNAi to the 40S ribosome. The eIF-3 complex specifically targets and initiates translation of a subset of mRNAs involved in cell proliferation. This subunit can bind 18S rRNA. The polypeptide is Eukaryotic translation initiation factor 3 subunit G (Scheffersomyces stipitis (strain ATCC 58785 / CBS 6054 / NBRC 10063 / NRRL Y-11545) (Yeast)).